The following is a 194-amino-acid chain: Mitochondrial import inner membrane translocase subunit Tim22 (194 aa).

2 disulfides stabilise this stretch: C69-C141 and C160-C179. 3 helical membrane-spanning segments follow: residues 74 to 94 (VLAC…TAGI), 123 to 143 (MSYA…ECLV), and 170 to 190 (AGVK…AAID).

The protein belongs to the Tim17/Tim22/Tim23 family. Component of the TIM22 complex, whose core is composed of TIMM22, associated with peripheral protein FXC1/TIMM10B and the 70 kDa heterohexamer. In most cases, the 70 kDa complex is composed of TIMM9 and TIMM10 (TIMM10A or TIMM10B). A small fraction of the 70 kDa complex is composed of TIMM8 (TIMM8A/DDP1 or TIMM8B/DDP2) and TIMM13. The TIM22 complex also contains AGK and TIMM29. Interacts directly with TIMM9, TIMM10A and FXC1/TIMM10B. Interacts (when oxidized) with TIMM29; interaction is direct. Post-translationally, disulfide bonds promote efficient assembly of the TIM22 complex.

It localises to the mitochondrion inner membrane. In terms of biological role, essential core component of the TIM22 complex, a complex that mediates the import and insertion of multi-pass transmembrane proteins into the mitochondrial inner membrane. In the TIM22 complex, it constitutes the voltage-activated and signal-gated channel. Forms a twin-pore translocase that uses the membrane potential as external driving force in 2 voltage-dependent steps. The sequence is that of Mitochondrial import inner membrane translocase subunit Tim22 (Timm22) from Mus musculus (Mouse).